The primary structure comprises 468 residues: 6-phospho-beta-galactosidase (468 aa).

D-galactose 6-phosphate is bound by residues glutamine 19, histidine 116, asparagine 159, glutamate 160, and asparagine 297. The Proton donor role is filled by glutamate 160. Glutamate 375 (nucleophile) is an active-site residue. The D-galactose 6-phosphate site is built by serine 428, tryptophan 429, lysine 435, and tyrosine 437.

The protein belongs to the glycosyl hydrolase 1 family.

It catalyses the reaction a 6-phospho-beta-D-galactoside + H2O = D-galactose 6-phosphate + an alcohol. It functions in the pathway carbohydrate metabolism; lactose degradation; D-galactose 6-phosphate and beta-D-glucose from lactose 6-phosphate: step 1/1. This chain is 6-phospho-beta-galactosidase, found in Streptococcus agalactiae serotype III (strain NEM316).